A 335-amino-acid chain; its full sequence is Tetraacyldisaccharide 4'-kinase (335 aa).

58–65 (TVGGSGKT) serves as a coordination point for ATP.

The protein belongs to the LpxK family.

The catalysed reaction is a lipid A disaccharide + ATP = a lipid IVA + ADP + H(+). Its pathway is glycolipid biosynthesis; lipid IV(A) biosynthesis; lipid IV(A) from (3R)-3-hydroxytetradecanoyl-[acyl-carrier-protein] and UDP-N-acetyl-alpha-D-glucosamine: step 6/6. Its function is as follows. Transfers the gamma-phosphate of ATP to the 4'-position of a tetraacyldisaccharide 1-phosphate intermediate (termed DS-1-P) to form tetraacyldisaccharide 1,4'-bis-phosphate (lipid IVA). This is Tetraacyldisaccharide 4'-kinase from Shewanella sp. (strain ANA-3).